A 428-amino-acid polypeptide reads, in one-letter code: Adenosylhomocysteinase (428 aa).

Threonine 62, aspartate 134, and glutamate 159 together coordinate substrate. NAD(+) is bound at residue 160 to 162; it reads TTT. The substrate site is built by lysine 189 and aspartate 193. Residues asparagine 194, 223-228, glutamate 246, asparagine 281, 302-304, and asparagine 349 each bind NAD(+); these read GYGWCG and SGH.

It belongs to the adenosylhomocysteinase family. The cofactor is NAD(+).

The protein resides in the cytoplasm. It carries out the reaction S-adenosyl-L-homocysteine + H2O = L-homocysteine + adenosine. It functions in the pathway amino-acid biosynthesis; L-homocysteine biosynthesis; L-homocysteine from S-adenosyl-L-homocysteine: step 1/1. In terms of biological role, may play a key role in the regulation of the intracellular concentration of adenosylhomocysteine. The sequence is that of Adenosylhomocysteinase from Gloeobacter violaceus (strain ATCC 29082 / PCC 7421).